Consider the following 158-residue polypeptide: MVVRRRKKSRKLRGRTRTMSWGRIGQHRKSGSKGGYGAAGLGKHEWTWTIKYAPTWYGKKGFNPPRIRAGLEVTTINVGQLDEIAALLEAQGKAEKEDGKIVVNLEKLGIHKLLGEGRVARPLKVITPLASELAIKKIEEAGGEVIVTRATREEAEES.

It belongs to the universal ribosomal protein uL15 family. As to quaternary structure, part of the 50S ribosomal subunit.

Functionally, binds to the 23S rRNA. This is Large ribosomal subunit protein uL15 from Aeropyrum pernix (strain ATCC 700893 / DSM 11879 / JCM 9820 / NBRC 100138 / K1).